The following is a 391-amino-acid chain: Chalcone synthase (391 aa).

Residue cysteine 164 is part of the active site.

This sequence belongs to the thiolase-like superfamily. Chalcone/stilbene synthases family.

The enzyme catalyses (E)-4-coumaroyl-CoA + 3 malonyl-CoA + 3 H(+) = 2',4,4',6'-tetrahydroxychalcone + 3 CO2 + 4 CoA. The protein operates within secondary metabolite biosynthesis; flavonoid biosynthesis. In terms of biological role, the primary product of this enzyme is 4,2',4',6'-tetrahydroxychalcone (also termed naringenin-chalcone or chalcone) which can under specific conditions spontaneously isomerize into naringenin. In Dianthus caryophyllus (Carnation), this protein is Chalcone synthase (CHS).